The sequence spans 538 residues: Atos homolog protein B (538 aa).

3 disordered regions span residues 1 to 99 (MRHV…PSTV), 165 to 185 (QGGQGCLGETPGPAPSGQLHT), and 199 to 270 (KSPV…GTLG). Residues 227 to 238 (HTPPGPGPPGPC) show a composition bias toward pro residues. Residues serine 254 and serine 255 each carry the phosphoserine modification. Positions 348-430 (LLGNFEESLL…VPKVGTIQVT (83 aa)) are required for macropage invasion. Residues 436–444 (QTVVKMFLV) form a transactivation domain 1 (TAD1) region.

Belongs to the ATOS family.

The protein resides in the nucleus. Transcription regulator that syncronizes transcriptional and translational programs to promote macrophage invasion of tissues. This Mus musculus (Mouse) protein is Atos homolog protein B.